The sequence spans 336 residues: Carbamoyl dehydratase HypE (336 aa).

An S-carbamoylcysteine; by HypF; alternate modification is found at Cys336. At Cys336 the chain carries S-cyanocysteine; by autocatalysis; alternate.

The protein belongs to the HypE family. In terms of assembly, homodimer. Forms a complex with HypF. Also forms a complex with HypC, or HybG, and HypD. Modified by HypF, which adds a carboxamido group to the thiolate of the C-terminal cysteine, yielding a protein-S-carboxamide. The carboxamido group is then dehydrated by HypE itself to yield a protein-thiocyanate.

It carries out the reaction C-terminal S-carboxamide-L-cysteinyl-[HypE protein] + ATP = C-terminal S-cyanate-L-cysteinyl-[HypE protein] + ADP + phosphate + H(+). Its pathway is protein modification; [NiFe] hydrogenase maturation. Involved in the maturation of [NiFe] hydrogenases. Along with HypF, it catalyzes the synthesis of the CN ligands of the active site iron of [NiFe]-hydrogenases. HypE catalyzes the ATP-dependent dehydration of the carboxamido group attached to its C-terminal cysteine to a cyano group. The cyano group is then transferred from HypE to the HypC-HypD complex or the HybG-HypD complex. The chain is Carbamoyl dehydratase HypE from Escherichia coli (strain K12).